A 56-amino-acid chain; its full sequence is Large ribosomal subunit protein bL32c (56 aa).

This sequence belongs to the bacterial ribosomal protein bL32 family.

Its subcellular location is the plastid. It localises to the chloroplast. This Huperzia lucidula (Shining clubmoss) protein is Large ribosomal subunit protein bL32c.